Here is a 318-residue protein sequence, read N- to C-terminus: Transaldolase (318 aa).

The active-site Schiff-base intermediate with substrate is K132.

This sequence belongs to the transaldolase family. Type 1 subfamily. Homodimer.

It is found in the cytoplasm. It catalyses the reaction D-sedoheptulose 7-phosphate + D-glyceraldehyde 3-phosphate = D-erythrose 4-phosphate + beta-D-fructose 6-phosphate. The protein operates within carbohydrate degradation; pentose phosphate pathway; D-glyceraldehyde 3-phosphate and beta-D-fructose 6-phosphate from D-ribose 5-phosphate and D-xylulose 5-phosphate (non-oxidative stage): step 2/3. Transaldolase is important for the balance of metabolites in the pentose-phosphate pathway. The protein is Transaldolase of Shewanella loihica (strain ATCC BAA-1088 / PV-4).